The chain runs to 116 residues: T cell receptor alpha variable 19 (116 aa).

The N-terminal stretch at 1-21 (MLTASLLRAVIASICVVSSMA) is a signal peptide. The 95-residue stretch at 22–116 (QKVTQAQTEI…SAVYFCALSE (95 aa)) folds into the Ig-like domain. C43 and C112 are joined by a disulfide. N96 is a glycosylation site (N-linked (GlcNAc...) asparagine).

Alpha-beta TR is a heterodimer composed of an alpha and beta chain; disulfide-linked. The alpha-beta TR is associated with the transmembrane signaling CD3 coreceptor proteins to form the TR-CD3 (TcR or TCR). The assembly of alpha-beta TR heterodimers with CD3 occurs in the endoplasmic reticulum where a single alpha-beta TR heterodimer associates with one CD3D-CD3E heterodimer, one CD3G-CD3E heterodimer and one CD247 homodimer forming a stable octameric structure. CD3D-CD3E and CD3G-CD3E heterodimers preferentially associate with TR alpha and TR beta chains, respectively. The association of the CD247 homodimer is the last step of TcR assembly in the endoplasmic reticulum and is required for transport to the cell surface.

Its subcellular location is the cell membrane. V region of the variable domain of T cell receptor (TR) alpha chain that participates in the antigen recognition. Alpha-beta T cell receptors are antigen specific receptors which are essential to the immune response and are present on the cell surface of T lymphocytes. Recognize peptide-major histocompatibility (MH) (pMH) complexes that are displayed by antigen presenting cells (APC), a prerequisite for efficient T cell adaptive immunity against pathogens. Binding of alpha-beta TR to pMH complex initiates TR-CD3 clustering on the cell surface and intracellular activation of LCK that phosphorylates the ITAM motifs of CD3G, CD3D, CD3E and CD247 enabling the recruitment of ZAP70. In turn ZAP70 phosphorylates LAT, which recruits numerous signaling molecules to form the LAT signalosome. The LAT signalosome propagates signal branching to three major signaling pathways, the calcium, the mitogen-activated protein kinase (MAPK) kinase and the nuclear factor NF-kappa-B (NF-kB) pathways, leading to the mobilization of transcription factors that are critical for gene expression and essential for T cell growth and differentiation. The T cell repertoire is generated in the thymus, by V-(D)-J rearrangement. This repertoire is then shaped by intrathymic selection events to generate a peripheral T cell pool of self-MH restricted, non-autoaggressive T cells. Post-thymic interaction of alpha-beta TR with the pMH complexes shapes TR structural and functional avidity. The polypeptide is T cell receptor alpha variable 19 (Homo sapiens (Human)).